We begin with the raw amino-acid sequence, 645 residues long: Macrolide export ATP-binding/permease protein MacB (645 aa).

Positions 6–244 (IELKDVTRYY…EAPQYRYARK (239 aa)) constitute an ABC transporter domain. 42–49 (GQSGSGKS) serves as a coordination point for ATP. 4 consecutive transmembrane segments (helical) span residues 271 to 291 (ALTL…LAIG), 520 to 540 (FSIL…IGVM), 577 to 597 (VVGG…VFII), and 608 to 628 (PLPA…FGLL).

It belongs to the ABC transporter superfamily. Macrolide exporter (TC 3.A.1.122) family. As to quaternary structure, homodimer.

It is found in the cell inner membrane. Functionally, non-canonical ABC transporter that contains transmembrane domains (TMD), which form a pore in the inner membrane, and an ATP-binding domain (NBD), which is responsible for energy generation. Confers resistance against macrolides. In Hyphomonas neptunium (strain ATCC 15444), this protein is Macrolide export ATP-binding/permease protein MacB.